The sequence spans 684 residues: Kinesin-like protein KIN-13B (684 aa).

2 disordered regions span residues 1 to 31 (MSGRQRSVAAAVHHQRQLSDNPLDMSSSNGR) and 71 to 103 (GNEFFGEPTTPQYGARPTNQRKNNDESEFSPGL). Composition is skewed to polar residues over residues 18 to 31 (LSDNPLDMSSSNGR) and 79 to 91 (TTPQYGARPTNQR). The Kinesin motor domain maps to 169–492 (KIKVVVRKRP…LRYADRVKSL (324 aa)). 258-265 (GQTGSGKT) contributes to the ATP binding site. Residues 574 to 594 (KPTIQMKSRDMPRPDMKKSNS) are disordered. Over residues 580–594 (KSRDMPRPDMKKSNS) the composition is skewed to basic and acidic residues. The stretch at 596 to 626 (DNLNALLQEEEDLVNAHRKQVEDTMNIVKEE) forms a coiled coil.

It belongs to the TRAFAC class myosin-kinesin ATPase superfamily. Kinesin family. KIN-13 subfamily.

Functionally, acts redundantly with KIN13A to modulate cell wall synthesis and cell expansion via the THE1 pathway. The polypeptide is Kinesin-like protein KIN-13B (Arabidopsis thaliana (Mouse-ear cress)).